The following is a 233-amino-acid chain: Large ribosomal subunit protein uL1 (233 aa).

It belongs to the universal ribosomal protein uL1 family. As to quaternary structure, part of the 50S ribosomal subunit.

Binds directly to 23S rRNA. The L1 stalk is quite mobile in the ribosome, and is involved in E site tRNA release. Functionally, protein L1 is also a translational repressor protein, it controls the translation of the L11 operon by binding to its mRNA. This chain is Large ribosomal subunit protein uL1, found in Shewanella putrefaciens (strain CN-32 / ATCC BAA-453).